A 522-amino-acid polypeptide reads, in one-letter code: 2-isopropylmalate synthase (522 aa).

Residues 5 to 267 (VIIFDTTLRD…ETGINAKEIH (263 aa)) enclose the Pyruvate carboxyltransferase domain. Residues aspartate 14, histidine 202, histidine 204, and asparagine 238 each coordinate Mn(2+). Residues 392–522 (QLRQLVVQSD…MHKNRELGGV (131 aa)) form a regulatory domain region.

This sequence belongs to the alpha-IPM synthase/homocitrate synthase family. LeuA type 1 subfamily. As to quaternary structure, homodimer. Mn(2+) serves as cofactor.

The protein localises to the cytoplasm. The catalysed reaction is 3-methyl-2-oxobutanoate + acetyl-CoA + H2O = (2S)-2-isopropylmalate + CoA + H(+). Its pathway is amino-acid biosynthesis; L-leucine biosynthesis; L-leucine from 3-methyl-2-oxobutanoate: step 1/4. Its function is as follows. Catalyzes the condensation of the acetyl group of acetyl-CoA with 3-methyl-2-oxobutanoate (2-ketoisovalerate) to form 3-carboxy-3-hydroxy-4-methylpentanoate (2-isopropylmalate). The polypeptide is 2-isopropylmalate synthase (Shewanella oneidensis (strain ATCC 700550 / JCM 31522 / CIP 106686 / LMG 19005 / NCIMB 14063 / MR-1)).